We begin with the raw amino-acid sequence, 570 residues long: nebramycin 5' synthase (570 aa).

A kae1-like region spans residues 1–354 (MRVLGLNGWP…AAAAVAVELG (354 aa)). Asp12 provides a ligand contact to tobramycin. His14 acts as the Proton acceptor in catalysis. Lys39 is an ATP binding site. Residues His114, His118, and Asp137 each coordinate Fe cation. Carbamoyl adenylate is bound by residues Gln139, Gly168, and Glu172. Tobramycin is bound by residues Glu172 and Asp228. The carbamoyl adenylate site is built by Gly310 and Asn314. Asp338 contributes to the Fe cation binding site. Residues 367-570 (GPEFSPDQVR…PYLVTKDLRH (204 aa)) form a yrdC-like region. Residues Arg418 and Arg449 each contribute to the ATP site. A carbamoyl phosphate-binding site is contributed by 418–419 (RA). Carbamoyl phosphate-binding positions include Arg498 and 528 to 530 (NTS).

It belongs to the NodU/CmcH family. Requires Fe(2+) as cofactor.

It catalyses the reaction tobramycin + carbamoyl phosphate + ATP + H2O = nebramycin 5' + AMP + phosphate + diphosphate + H(+). The enzyme catalyses kanamycin A + carbamoyl phosphate + ATP + H2O = 6''-O-carbamoylkanamycin A + AMP + phosphate + diphosphate + H(+). The catalysed reaction is carbamoyl phosphate + ATP + H2O = carbamoyl adenylate + phosphate + diphosphate. It carries out the reaction tobramycin + carbamoyl adenylate = nebramycin 5' + AMP + H(+). It catalyses the reaction carbamoyl adenylate + kanamycin A = 6''-O-carbamoylkanamycin A + AMP + H(+). The protein operates within antibiotic biosynthesis; kanamycin biosynthesis. It functions in the pathway antibiotic biosynthesis; tobramycin biosynthesis. Its activity is regulated as follows. ADP inhibits the formation of nebramycin 5'. Functionally, tobZ is involved in the biosynthesis of the 2-deoxystreptamine-containing aminoglycoside antibiotics such as nebramycin 5 and 6-O-carbamoylkanamycin. Catalyzes the hydrolysis of carbamoyl phosphate and its subsequent adenylation by ATP to yield O-carbamoyladenylate. Then it catalyzes the transfer of the carbamoyl moiety from O-carbamoyladenylate to the tobramycin 6-hydroxy group to yield nebramycin 5'. It catalyzes the same reaction with kanamycin A. These reactions are considerably slower in the presence of deoxy-ATP. The polypeptide is nebramycin 5' synthase (tobZ) (Streptoalloteichus tenebrarius (strain ATCC 17920 / DSM 40477 / JCM 4838 / CBS 697.72 / NBRC 16177 / NCIMB 11028 / NRRL B-12390 / A12253. 1 / ISP 5477) (Streptomyces tenebrarius)).